The following is a 724-amino-acid chain: MRFFVSCAKGLEYLLVDEVLALGAAGATATVAGVNVEGGLCDAQRLVLWSRLASRVLWPLAAFACADEDALYAGVAALPWVEHVLPGQTLAVDAHVSGEAITHARYAAQRVKDAVVDTLRDAGVVRPSVDVEHPDVRLNLSLRKGRATLSVDLGGRALHHRGWRQAPHAASLKEHLAAAVLLRAGWAKVYAEGGGLLDPMCGSGTLLIEGALMVADVAPGLSRYADPDAMSHVSVAERPVLLPSRWRGFDVVAWEALVVDAQQRARRGLAELRPVLHGSDIDPRALGAASANARAAGVQDAIEFVVAGIDVLPAVSEPHGVVVCNAPYDVRLAADPGLYRHLGDALRRVVPRWRAALVCGSNTLAFATGLRAGKRYQFFNGALECVLIVCDPVVPLAREAGGAQALSEGAQMAANRLRKNVQRLKKWRIRAGVECYRVYDADLPEYAAAIDVYQEVDGARRLFLHVQEYAAPTSIPEGDVRRRRHELLAAVRAVFDVSVAQVALKTRQRGKGGSQYGCFAQRGEFFHVCEHGALLRVNLFDYLDTGLFLDHRPLRGRMAREAVGKRFLNVFCYTGVASVEAAVAGAAATTSVDLSSTYLHWCTDNFALNGQGGVRHRLVQADALAWLEAERGQYDVIFCDPPTFSNSARADDFDVQRDHVRLLRAAVARLTPGGVLYFSNNFRRFRLDVDAVAAFAQCEEISSVTIDLDFSRNTRIHRTWLLWR.

Positions 42-153 (DAQRLVLWSR…KGRATLSVDL (112 aa)) constitute a THUMP domain.

This sequence belongs to the methyltransferase superfamily. RlmKL family.

It localises to the cytoplasm. It carries out the reaction guanosine(2445) in 23S rRNA + S-adenosyl-L-methionine = N(2)-methylguanosine(2445) in 23S rRNA + S-adenosyl-L-homocysteine + H(+). The enzyme catalyses guanosine(2069) in 23S rRNA + S-adenosyl-L-methionine = N(2)-methylguanosine(2069) in 23S rRNA + S-adenosyl-L-homocysteine + H(+). Specifically methylates the guanine in position 2445 (m2G2445) and the guanine in position 2069 (m7G2069) of 23S rRNA. In Xylella fastidiosa (strain M12), this protein is Ribosomal RNA large subunit methyltransferase K/L.